Reading from the N-terminus, the 413-residue chain is uncharacterized protein (413 aa).

Positions 2–129 (RILIVDDENT…KTTWKLRLME (128 aa)) constitute a Response regulatory domain. D54 bears the 4-aspartylphosphate mark.

This is an uncharacterized protein from Sinorhizobium fredii (strain NBRC 101917 / NGR234).